We begin with the raw amino-acid sequence, 880 residues long: Valine--tRNA ligase (880 aa).

The short motif at 46-56 (PNVTGKLHLGH) is the 'HIGH' region element. The 'KMSKS' region motif lies at 520 to 524 (KMSKS). Residue K523 participates in ATP binding. The stretch at 808-880 (LAGLINIEEE…KARIAELKEN (73 aa)) forms a coiled coil.

Belongs to the class-I aminoacyl-tRNA synthetase family. ValS type 1 subfamily. In terms of assembly, monomer.

Its subcellular location is the cytoplasm. It catalyses the reaction tRNA(Val) + L-valine + ATP = L-valyl-tRNA(Val) + AMP + diphosphate. Functionally, catalyzes the attachment of valine to tRNA(Val). As ValRS can inadvertently accommodate and process structurally similar amino acids such as threonine, to avoid such errors, it has a 'posttransfer' editing activity that hydrolyzes mischarged Thr-tRNA(Val) in a tRNA-dependent manner. The chain is Valine--tRNA ligase from Lactococcus lactis subsp. lactis (strain IL1403) (Streptococcus lactis).